The following is a 141-amino-acid chain: Nucleoside diphosphate kinase (141 aa).

6 residues coordinate ATP: Lys11, Phe59, Arg87, Thr93, Arg104, and Asn114. The active-site Pros-phosphohistidine intermediate is His117.

This sequence belongs to the NDK family. In terms of assembly, homotetramer. Mg(2+) serves as cofactor.

The protein resides in the cytoplasm. The enzyme catalyses a 2'-deoxyribonucleoside 5'-diphosphate + ATP = a 2'-deoxyribonucleoside 5'-triphosphate + ADP. The catalysed reaction is a ribonucleoside 5'-diphosphate + ATP = a ribonucleoside 5'-triphosphate + ADP. In terms of biological role, major role in the synthesis of nucleoside triphosphates other than ATP. The ATP gamma phosphate is transferred to the NDP beta phosphate via a ping-pong mechanism, using a phosphorylated active-site intermediate. In Burkholderia thailandensis (strain ATCC 700388 / DSM 13276 / CCUG 48851 / CIP 106301 / E264), this protein is Nucleoside diphosphate kinase.